The sequence spans 113 residues: Large ribosomal subunit protein bL19 (113 aa).

Belongs to the bacterial ribosomal protein bL19 family.

In terms of biological role, this protein is located at the 30S-50S ribosomal subunit interface and may play a role in the structure and function of the aminoacyl-tRNA binding site. The polypeptide is Large ribosomal subunit protein bL19 (Mycolicibacterium smegmatis (strain ATCC 700084 / mc(2)155) (Mycobacterium smegmatis)).